The primary structure comprises 935 residues: Protocadherin gamma-A11 (935 aa).

An N-terminal signal peptide occupies residues 1-29 (MANRLQRGDRSRLLLLLCIFLGTLRGFRA). Cadherin domains lie at 30–134 (RQIR…APSF), 135–243 (QEDE…IPMF), 244–348 (TQSV…APEI), 349–453 (TITS…PPVF), 454–563 (PHSS…APEI), and 571–677 (DGST…ADLG). At 30–693 (RQIRYSVPEE…NSETSDLSLY (664 aa)) the chain is on the extracellular side. Asn-48 carries an N-linked (GlcNAc...) asparagine glycan. Asn-255, Asn-266, Asn-420, and Asn-546 each carry an N-linked (GlcNAc...) asparagine glycan. The chain crosses the membrane as a helical span at residues 694–714 (LVVAVAAVSCIFLVFVIVLLA). The Cytoplasmic segment spans residues 715-935 (LRLWRWHKSR…KKKSGKKEKK (221 aa)). Disordered stretches follow at residues 805-844 (CDPTSNQQAPPNTDWRFSQAQRPGTSGSQNGDDTGTWPNN) and 905-935 (ATLTNAAGKRDGKAPAGGNGNKKKSGKKEKK). Over residues 807–844 (PTSNQQAPPNTDWRFSQAQRPGTSGSQNGDDTGTWPNN) the composition is skewed to polar residues. Residues 925-935 (NKKKSGKKEKK) show a composition bias toward basic residues.

It is found in the cell membrane. Functionally, potential calcium-dependent cell-adhesion protein. May be involved in the establishment and maintenance of specific neuronal connections in the brain. The protein is Protocadherin gamma-A11 (PCDHGA11) of Homo sapiens (Human).